The sequence spans 345 residues: MLTQRQDNILHQIIHNYTNLGKPIGSKTLMEEGIAASSATIRNEMKTLEEYGLLVKPHSSSGRIPSLKGYRYYVDYLLEPEKLKKSEVDVMQQSLGKDFHEINDIIEQSAKILSKLTSYTALSIGPDVSNRKLTGFKMVPLNNRQVIAIIVTDKGNVENQVFSIPKSVDSEDLEKMVRIINDKLIGEPLLIVYQRLGTEIPMILHKYFQTTEGILDLFNNMLSEAFEEKIFVGGQMNLLNSDQIQNIDQFKSMLFMENSKQLNELLSTKDQPIQIRIGSELGNDLLSDMSLIQANYEIKDHGNGTIALLGSASMPYSKMLSLLDVFRQELAETLDDYYRSIDSFG.

Belongs to the HrcA family.

Its function is as follows. Negative regulator of class I heat shock genes (grpE-dnaK-dnaJ and groELS operons). Prevents heat-shock induction of these operons. This is Heat-inducible transcription repressor HrcA from Tetragenococcus halophilus (Pediococcus halophilus).